The sequence spans 523 residues: Aldehyde oxidase GLOX (523 aa).

The N-terminal stretch at M1–L19 is a signal peptide.

The protein localises to the secreted. It is found in the cell wall. The enzyme catalyses an aldehyde + O2 + H2O = a carboxylate + H2O2 + H(+). Functionally, catalyzes the oxidation of aldehydes to the corresponding carboxylate by coupling the reaction to the reduction of dioxygen to hydrogen peroxide. Substrates include glyoxal and other aldehydes. Involved in disease resistance against the grapevine powdery mildew E.necator. Is sufficient to confer disease resistance to E.necator. Can produce hydrogen peroxide in response to E.necator infection, and this may directly play a role in the defense mechanism during plant-pathogen interactions. This is Aldehyde oxidase GLOX from Vitis pseudoreticulata (Chinese wild grapevine).